A 357-amino-acid chain; its full sequence is Protein-glutamate methylesterase/protein-glutamine glutaminase 1 (357 aa).

The region spanning 7-124 (KVLCVDDSAL…REGLLDYTQT (118 aa)) is the Response regulatory domain. 4-aspartylphosphate is present on aspartate 58. The region spanning 158–350 (LLSTEKLIIV…QRVMAHLATF (193 aa)) is the CheB-type methylesterase domain. Residues serine 170, histidine 196, and aspartate 292 contribute to the active site.

The protein belongs to the CheB family. Phosphorylated by CheA. Phosphorylation of the N-terminal regulatory domain activates the methylesterase activity.

Its subcellular location is the cytoplasm. It carries out the reaction [protein]-L-glutamate 5-O-methyl ester + H2O = L-glutamyl-[protein] + methanol + H(+). The catalysed reaction is L-glutaminyl-[protein] + H2O = L-glutamyl-[protein] + NH4(+). Functionally, involved in chemotaxis. Part of a chemotaxis signal transduction system that modulates chemotaxis in response to various stimuli. Catalyzes the demethylation of specific methylglutamate residues introduced into the chemoreceptors (methyl-accepting chemotaxis proteins or MCP) by CheR. Also mediates the irreversible deamidation of specific glutamine residues to glutamic acid. This Cupriavidus metallidurans (strain ATCC 43123 / DSM 2839 / NBRC 102507 / CH34) (Ralstonia metallidurans) protein is Protein-glutamate methylesterase/protein-glutamine glutaminase 1.